Consider the following 415-residue polypeptide: Probable carboxypeptidase ACLA_013260 (415 aa).

Residues 1–17 (MKFPWLLLVKGAASVAA) form the signal peptide. An N-linked (GlcNAc...) asparagine glycan is attached at Asn97. Asp145 provides a ligand contact to Zn(2+). Catalysis depends on Glu177, which acts as the Proton acceptor. Glu178 is a Zn(2+) binding site. N-linked (GlcNAc...) asparagine glycosylation is present at Asn271.

It belongs to the peptidase M20A family. It depends on Zn(2+) as a cofactor.

The protein resides in the secreted. The protein is Probable carboxypeptidase ACLA_013260 of Aspergillus clavatus (strain ATCC 1007 / CBS 513.65 / DSM 816 / NCTC 3887 / NRRL 1 / QM 1276 / 107).